Consider the following 319-residue polypeptide: Ribosomal large subunit pseudouridine synthase C (319 aa).

The S4 RNA-binding domain maps to 20–83; that stretch reads QRIDNFLRTQ…AEREEEAVSP (64 aa). Asp-144 is a catalytic residue.

Belongs to the pseudouridine synthase RluA family.

The catalysed reaction is uridine(955/2504/2580) in 23S rRNA = pseudouridine(955/2504/2580) in 23S rRNA. Functionally, responsible for synthesis of pseudouridine from uracil at positions 955, 2504 and 2580 in 23S ribosomal RNA. This Escherichia coli O157:H7 protein is Ribosomal large subunit pseudouridine synthase C (rluC).